We begin with the raw amino-acid sequence, 859 residues long: Envelope glycoprotein (859 aa).

The propeptide occupies 1–6; that stretch reads MVSIAF. At 7–614 the chain is on the extracellular side; sequence YGGIPGGIST…KDLWSHIGNW (608 aa). 13 N-linked (GlcNAc...) asparagine; by host glycosylation sites follow: Asn-40, Asn-112, Asn-141, Asn-148, Asn-186, Asn-214, Asn-233, Asn-244, Asn-340, Asn-368, Asn-399, Asn-406, and Asn-411. The fusion peptide stretch occupies residues 446–466; that stretch reads FGISAIVAAIVAATAIAASAT. N-linked (GlcNAc...) asparagine; by host glycosylation is found at Asn-483 and Asn-490. The immunosuppression stretch occupies residues 498–513; that stretch reads LIERQIKILYAMILQT. N-linked (GlcNAc...) asparagine; by host glycans are attached at residues Asn-550 and Asn-557. 2 coiled-coil regions span residues 576–624 and 663–699; these read ILTT…SIIK and KKFH…YYKQ. A helical transmembrane segment spans residues 615–635; sequence IPGLGASIIKYIVMFLLIYLL. At 636 to 859 the chain is on the cytoplasmic side; the sequence is LTSSPKILRA…TSHVSMPQYV (224 aa).

The mature envelope protein (Env) consists of a trimer of SU-TM heterodimers attached by noncovalent interactions or by a labile interchain disulfide bond. In terms of processing, specific enzymatic cleavages in vivo yield mature proteins. Envelope glycoproteins are synthesized as an inactive precursor that is N-glycosylated and processed likely by host cell furin or by a furin-like protease in the Golgi to yield the mature SU and TM proteins. The cleavage site between SU and TM requires the minimal sequence [KR]-X-[KR]-R.

The protein localises to the virion membrane. The protein resides in the host cell membrane. Functionally, the surface protein (SU) attaches the virus to the host cell by binding to its receptor. This interaction triggers the refolding of the transmembrane protein (TM) and is thought to activate its fusogenic potential by unmasking its fusion peptide. Fusion occurs at the host cell plasma membrane. The transmembrane protein (TM) acts as a class I viral fusion protein. Under the current model, the protein has at least 3 conformational states: pre-fusion native state, pre-hairpin intermediate state, and post-fusion hairpin state. During viral and target cell membrane fusion, the coiled coil regions (heptad repeats) assume a trimer-of-hairpins structure, positioning the fusion peptide in close proximity to the C-terminal region of the ectodomain. The formation of this structure appears to drive apposition and subsequent fusion of viral and target cell membranes. Membranes fusion leads to delivery of the nucleocapsid into the cytoplasm. The protein is Envelope glycoprotein (env) of Equine infectious anemia virus (isolate 1369) (EIAV).